The primary structure comprises 160 residues: Transcription elongation factor GreA (160 aa).

Residues 3-84 adopt a coiled-coil conformation; the sequence is SIVNDKILLT…SKAKIIKADL (82 aa).

Belongs to the GreA/GreB family.

Necessary for efficient RNA polymerase transcription elongation past template-encoded arresting sites. The arresting sites in DNA have the property of trapping a certain fraction of elongating RNA polymerases that pass through, resulting in locked ternary complexes. Cleavage of the nascent transcript by cleavage factors such as GreA or GreB allows the resumption of elongation from the new 3'terminus. GreA releases sequences of 2 to 3 nucleotides. The sequence is that of Transcription elongation factor GreA from Mesomycoplasma hyopneumoniae (strain 7448) (Mycoplasma hyopneumoniae).